The primary structure comprises 261 residues: Cytochrome c oxidase subunit 3 (261 aa).

Residues 1–15 (MAHQAHAYHMVDPSP) are Mitochondrial matrix-facing. The helical transmembrane segment at 16–34 (WPLTGAIAALLLTSGTAVW) threads the bilayer. Topologically, residues 35-40 (FHFHSL) are mitochondrial intermembrane. Residues 41–66 (TLLTLGNVLLLLTMYQWWRDIIREGT) traverse the membrane as a helical segment. The Mitochondrial matrix segment spans residues 67-72 (FQGHHT). Residues 73–105 (PPVQKGLRYGMILFITSEVFFFLGFFWAFYHAS) traverse the membrane as a helical segment. Residues 106–128 (LAPTPELGGCWPPTGITTLDPFE) lie on the Mitochondrial intermembrane side of the membrane. The chain crosses the membrane as a helical span at residues 129-152 (VPLLNTAVLLASGVTVTWAHHSIM). The Mitochondrial matrix segment spans residues 153-155 (EGE). A helical membrane pass occupies residues 156-183 (RKQTIQALTLTILLGFYFTFLQGMEYYE). Topologically, residues 184-190 (APFTIAD) are mitochondrial intermembrane. The helical transmembrane segment at 191 to 223 (GVYGSTFFVATGFHGLHVIIGSTFLAVCLLRQV) threads the bilayer. Residues 224 to 232 (QYHFTSEHH) lie on the Mitochondrial matrix side of the membrane. The chain crosses the membrane as a helical span at residues 233 to 256 (FGFEAAAWYWHFVDVVWLFLYVSI). At 257 to 261 (YWWGS) the chain is on the mitochondrial intermembrane side.

The protein belongs to the cytochrome c oxidase subunit 3 family. In terms of assembly, component of the cytochrome c oxidase (complex IV, CIV), a multisubunit enzyme composed of 14 subunits. The complex is composed of a catalytic core of 3 subunits MT-CO1, MT-CO2 and MT-CO3, encoded in the mitochondrial DNA, and 11 supernumerary subunits COX4I, COX5A, COX5B, COX6A, COX6B, COX6C, COX7A, COX7B, COX7C, COX8 and NDUFA4, which are encoded in the nuclear genome. The complex exists as a monomer or a dimer and forms supercomplexes (SCs) in the inner mitochondrial membrane with NADH-ubiquinone oxidoreductase (complex I, CI) and ubiquinol-cytochrome c oxidoreductase (cytochrome b-c1 complex, complex III, CIII), resulting in different assemblies (supercomplex SCI(1)III(2)IV(1) and megacomplex MCI(2)III(2)IV(2)).

Its subcellular location is the mitochondrion inner membrane. The enzyme catalyses 4 Fe(II)-[cytochrome c] + O2 + 8 H(+)(in) = 4 Fe(III)-[cytochrome c] + 2 H2O + 4 H(+)(out). Its function is as follows. Component of the cytochrome c oxidase, the last enzyme in the mitochondrial electron transport chain which drives oxidative phosphorylation. The respiratory chain contains 3 multisubunit complexes succinate dehydrogenase (complex II, CII), ubiquinol-cytochrome c oxidoreductase (cytochrome b-c1 complex, complex III, CIII) and cytochrome c oxidase (complex IV, CIV), that cooperate to transfer electrons derived from NADH and succinate to molecular oxygen, creating an electrochemical gradient over the inner membrane that drives transmembrane transport and the ATP synthase. Cytochrome c oxidase is the component of the respiratory chain that catalyzes the reduction of oxygen to water. Electrons originating from reduced cytochrome c in the intermembrane space (IMS) are transferred via the dinuclear copper A center (CU(A)) of subunit 2 and heme A of subunit 1 to the active site in subunit 1, a binuclear center (BNC) formed by heme A3 and copper B (CU(B)). The BNC reduces molecular oxygen to 2 water molecules using 4 electrons from cytochrome c in the IMS and 4 protons from the mitochondrial matrix. The sequence is that of Cytochrome c oxidase subunit 3 (mt-co3) from Oncorhynchus masou (Cherry salmon).